Here is a 314-residue protein sequence, read N- to C-terminus: Olfactory receptor 4K2 (314 aa).

At 1-25 (MDVGNKSTMSEFVLLGLSNSWELQM) the chain is on the extracellular side. An N-linked (GlcNAc...) asparagine glycan is attached at Asn5. Residues 26 to 49 (FFFMVFSLLYVATMVGNSLIVITV) traverse the membrane as a helical segment. Topologically, residues 50-57 (IVDPHLHS) are cytoplasmic. A helical membrane pass occupies residues 58 to 79 (PMYFLLTNLSIIDMSLASFATP). The Extracellular portion of the chain corresponds to 80 to 100 (KMITDYLTGHKTISFDGCLTQ). A disulfide bridge links Cys97 with Cys189. Residues 101 to 120 (IFFLHLFTGTEIILLMAMSF) traverse the membrane as a helical segment. Over 121–139 (DRYIAICKPLHYASVISPQ) the chain is Cytoplasmic. The helical transmembrane segment at 140 to 158 (VCVALVVASWIMGVMHSMS) threads the bilayer. The Extracellular portion of the chain corresponds to 159–195 (QVIFALTLPFCGPYEVDSFFCDLPVVFQLACVDTYVL). The chain crosses the membrane as a helical span at residues 196-219 (GLFMISTSGIIALSCFIVLFNSYV). Residues 220-235 (IVLVTVKHHSSRGSSK) lie on the Cytoplasmic side of the membrane. The helical transmembrane segment at 236–258 (ALSTCTAHFIVVFLFFGPCIFIY) threads the bilayer. Residues 259-269 (MWPLSSFLTDK) lie on the Extracellular side of the membrane. Residues 270–289 (ILSVFYTIFTPTLNPIIYTL) traverse the membrane as a helical segment. Over 290 to 314 (RNQEVKIAMRKLKNRFLNFNKAMPS) the chain is Cytoplasmic.

The protein belongs to the G-protein coupled receptor 1 family.

It is found in the cell membrane. Odorant receptor. The chain is Olfactory receptor 4K2 (OR4K2) from Homo sapiens (Human).